We begin with the raw amino-acid sequence, 1262 residues long: Protein stoned-B (1262 aa).

4 short sequence motifs (NPF) span residues 3-5, 19-21, 33-35, and 43-45; these read NPF. Positions 17-36 are disordered; the sequence is AANPFLMQSEPEPSSDNPFM. The interval 49-189 is disordered; it reads ADDLELGAEP…DVSVDSGSSA (141 aa). Residues 50-60 are compositionally biased toward acidic residues; it reads DDLELGAEPEA. A compositionally biased stretch (low complexity) spans 101-111; that stretch reads PPQSQPQLQSH. The span at 115 to 124 shows a compositional bias: pro residues; sequence HPPPPRPLVP. Residues 128 to 145 are compositionally biased toward polar residues; sequence TQDLISTVSSQLDETSSE. A compositionally biased stretch (low complexity) spans 172–189; the sequence is DSGLADLLDVSVDSGSSA. The NPF 5 motif lies at 210-212; that stretch reads NPF. Disordered stretches follow at residues 225 to 452 and 474 to 507; these read VPLP…SPPT and EEMD…NFAP. Positions 233-272 are enriched in pro residues; that stretch reads KQPPRPPPPRPAPPRPAPPGQAAPQRPPPPLAAVNPPPAA. The segment covering 325 to 345 has biased composition (acidic residues); sequence DLDETIGEGEPPEQEEPDTEQ. A compositionally biased stretch (polar residues) spans 384-401; the sequence is QVNNMAAPSGTASTQRAT. Positions 417–429 are enriched in acidic residues; it reads DDEDEPEAMQEPE. The NPF 6 motif lies at 493–495; sequence NPF. 2 positions are modified to phosphoserine: serine 623 and serine 626. Residues 643-709 form a disordered region; it reads SGVAPQLAPP…QDTPQTPLYD (67 aa). Residues 673 to 675 carry the NPF 7 motif; sequence NPF. The 175-residue stretch at 728-902 folds into the SHD domain; that stretch reads GWEMQLRQPN…KIPALRERAL (175 aa). The segment at 847-1108 is interaction with Syt; the sequence is KEFGSDLKKL…KGIERILGAV (262 aa). An MHD domain is found at 906-1219; it reads MEEVQVTAVD…ARHEYKVGIE (314 aa). The interval 1226-1262 is disordered; it reads TNAYLAATRPIREEPPTTATKPTASPVAPSDSDTDSN. Low complexity predominate over residues 1241–1254; that stretch reads PTTATKPTASPVAP.

It belongs to the Stoned B family. Interacts with the second C2 domain of Syt.

The protein resides in the cytoplasm. It localises to the synapse. Adapter protein involved in endocytic recycling of synaptic vesicles membranes. May act by mediating the retrieval of synaptotagmin protein Syt from the plasma membrane, thereby facilitating the internalization of multiple synaptic vesicles from the plasma membrane. The protein is Protein stoned-B (stnB) of Drosophila melanogaster (Fruit fly).